The primary structure comprises 215 residues: Probable GTP-binding protein EngB (215 aa).

The EngB-type G domain maps to 30 to 204 (TGIEVAFAGR…RQKLDTWFSE (175 aa)). GTP is bound by residues 38 to 45 (GRSNAGKS), 65 to 69 (GRTQL), 83 to 86 (DLPG), 150 to 153 (TKAD), and 183 to 185 (FSS). Positions 45 and 67 each coordinate Mg(2+).

This sequence belongs to the TRAFAC class TrmE-Era-EngA-EngB-Septin-like GTPase superfamily. EngB GTPase family. Mg(2+) serves as cofactor.

Necessary for normal cell division and for the maintenance of normal septation. In Escherichia coli O1:K1 / APEC, this protein is Probable GTP-binding protein EngB.